Here is a 409-residue protein sequence, read N- to C-terminus: NADH-quinone oxidoreductase subunit D (409 aa).

This sequence belongs to the complex I 49 kDa subunit family. In terms of assembly, NDH-1 is composed of 14 different subunits. Subunits NuoB, C, D, E, F, and G constitute the peripheral sector of the complex.

The protein localises to the cell inner membrane. The enzyme catalyses a quinone + NADH + 5 H(+)(in) = a quinol + NAD(+) + 4 H(+)(out). In terms of biological role, NDH-1 shuttles electrons from NADH, via FMN and iron-sulfur (Fe-S) centers, to quinones in the respiratory chain. The immediate electron acceptor for the enzyme in this species is believed to be ubiquinone. Couples the redox reaction to proton translocation (for every two electrons transferred, four hydrogen ions are translocated across the cytoplasmic membrane), and thus conserves the redox energy in a proton gradient. The chain is NADH-quinone oxidoreductase subunit D from Campylobacter concisus (strain 13826).